Reading from the N-terminus, the 242-residue chain is Fibrinolytic enzyme, isozyme C (242 aa).

The region spanning 1-242 (VIGGTNASPG…YLGWIGDNSR (242 aa)) is the Peptidase S1 domain. C29 and C45 are oxidised to a cystine. Residues H44 and D93 each act as charge relay system in the active site. 3 disulfide bridges follow: C127-C197, C158-C176, and C187-C219. S191 acts as the Charge relay system in catalysis.

It belongs to the peptidase S1 family.

The sequence is that of Fibrinolytic enzyme, isozyme C from Lumbricus rubellus (Humus earthworm).